The following is a 326-amino-acid chain: Ornithine carbamoyltransferase (326 aa).

Carbamoyl phosphate contacts are provided by residues 57–60, glutamine 84, arginine 108, and 135–138; these read STRT and HPTQ. Residues asparagine 169, aspartate 233, and 237 to 238 each bind L-ornithine; that span reads SM. 275 to 276 provides a ligand contact to carbamoyl phosphate; it reads CL.

Belongs to the aspartate/ornithine carbamoyltransferase superfamily. OTCase family.

It is found in the cytoplasm. It catalyses the reaction carbamoyl phosphate + L-ornithine = L-citrulline + phosphate + H(+). It participates in amino-acid biosynthesis; L-arginine biosynthesis; L-arginine from L-ornithine and carbamoyl phosphate: step 1/3. Functionally, reversibly catalyzes the transfer of the carbamoyl group from carbamoyl phosphate (CP) to the N(epsilon) atom of ornithine (ORN) to produce L-citrulline. This Escherichia coli O6:K15:H31 (strain 536 / UPEC) protein is Ornithine carbamoyltransferase.